The sequence spans 341 residues: Casein kinase I isoform alpha (341 aa).

The Protein kinase domain occupies 16-284 (YKLIRKIGSG…YLRQLFRILF (269 aa)). ATP contacts are provided by residues 22–30 (IGSGSFGDI) and Lys45. Asp135 (proton acceptor) is an active-site residue. The segment covering 306–320 (QSQSSGVPGTNTTTQ) has biased composition (polar residues). Residues 306-341 (QSQSSGVPGTNTTTQGATVPSAGVPAGVAPGGTTPQ) are disordered. The span at 321 to 341 (GATVPSAGVPAGVAPGGTTPQ) shows a compositional bias: low complexity.

This sequence belongs to the protein kinase superfamily. CK1 Ser/Thr protein kinase family. Casein kinase I subfamily.

The catalysed reaction is L-seryl-[protein] + ATP = O-phospho-L-seryl-[protein] + ADP + H(+). It catalyses the reaction L-threonyl-[protein] + ATP = O-phospho-L-threonyl-[protein] + ADP + H(+). The protein is Casein kinase I isoform alpha (kin-19) of Caenorhabditis elegans.